Consider the following 207-residue polypeptide: N-(5'-phosphoribosyl)anthranilate isomerase (207 aa).

It belongs to the TrpF family.

It catalyses the reaction N-(5-phospho-beta-D-ribosyl)anthranilate = 1-(2-carboxyphenylamino)-1-deoxy-D-ribulose 5-phosphate. It functions in the pathway amino-acid biosynthesis; L-tryptophan biosynthesis; L-tryptophan from chorismate: step 3/5. The polypeptide is N-(5'-phosphoribosyl)anthranilate isomerase (Halorhodospira halophila (strain DSM 244 / SL1) (Ectothiorhodospira halophila (strain DSM 244 / SL1))).